A 584-amino-acid polypeptide reads, in one-letter code: ATP synthase subunit alpha, mitochondrial (584 aa).

The N-terminal 24 residues, 1–24 (MRRFGSKFASGLASRCALACPLAS), are a transit peptide targeting the mitochondrion. ATP-binding positions include 207–214 (DRQTGKTS) and Gln-464.

Belongs to the ATPase alpha/beta chains family. As to quaternary structure, F-type ATPases have 2 components, F(1) - the catalytic core - and F(o) - the membrane proton channel. F(1) has five subunits: alpha(3), beta(3), gamma(1), delta(1), epsilon(1), plus the additional subunit P18 (Tb427.05.1710) that is not present in F(1)F(o) ATP synthase from metazoa. Subunit P18 (Tb927.5.1710) interacts with the alpha subunit with a 1:1 stoichiometry; the interaction is direct. Subunit gamma is part of the central stalk. F(o) has three main subunits: a, b and c. The trypanosomal ATPase complex contains additional subunits that are not present in the F(1)F(o) ATP synthase from metazoa.

The protein localises to the mitochondrion. It localises to the mitochondrion inner membrane. Functionally, mitochondrial membrane ATP synthase (F(1)F(o) ATP synthase) produces ATP from ADP in the presence of a proton gradient across the membrane which is generated by electron transport complexes of the respiratory chain. F-type ATPases consist of two structural domains, F(1) - containing the extramembraneous catalytic core, and F(o) - containing the membrane proton channel, linked together by a central stalk and a peripheral stalk. During catalysis, ATP synthesis in the catalytic domain of F(1) is coupled via a rotary mechanism of the central stalk subunits to proton translocation. Subunits alpha and beta form the catalytic core in F(1). Rotation of the central stalk against the surrounding alpha(3)beta(3) subunits leads to hydrolysis of ATP in three separate catalytic sites on the beta subunits. Subunit alpha does not bear the catalytic high-affinity ATP-binding sites. Contrary to the procyclic, insect form that requires F(1)F(o) ATP synthase for ATP synthesis, the bloodstream form relies on ATP hydrolysis by F(1)F(o) ATP synthase to maintain its mitochondrial membrane potential. The chain is ATP synthase subunit alpha, mitochondrial from Trypanosoma brucei brucei.